Here is a 176-residue protein sequence, read N- to C-terminus: Cytochrome c-552 (176 aa).

A helical; Signal-anchor membrane pass occupies residues 12–32 (GALIGSLLFLLLMSWAASGIF). Cysteine 90, cysteine 93, histidine 94, methionine 126, and methionine 154 together coordinate heme c.

Post-translationally, binds 1 heme c group covalently per subunit.

The protein localises to the cell membrane. In terms of biological role, mediates the electron transport between the cytochrome bc1 complex and cytochrome-c oxidase. This chain is Cytochrome c-552 (cycM), found in Paracoccus denitrificans.